A 526-amino-acid polypeptide reads, in one-letter code: MAVFPNSCLAGCLLIFILLQLPKLDSAPFDVIGPQEPILAVVGEDAELPCRLSPNVSAKGMELRWFREKVSPAVFVSREGQEQEGEEMAEYRGRVSLVEDHIAEGSVAVRIQEVKASDDGEYRCFFRQDENYEEAIVHLKVAALGSDPHISMKVQESGEIQLECTSVGWYPEPQVQWRTHRGEEFPSMSESRNPDEEGLFTVRASVIIRDSSMKNVSCCIRNLLLGQEKEVEVSIPASFFPRLTPWMVAVAVILVVLGLLTIGSIFFTWRLYKERSRQRRNEFSSKEKLLEELKWKRATLHAVDVTLDPDTAHPHLFLYEDSKSVRLEDSRQKLPEKPERFDSWPCVMGREAFTSGRHYWEVEVGDRTDWAIGVCRENVMKKGFDPMTPENGFWAVELYGNGYWALTPLRTPLPLAGPPRRVGVFLDYESGDIFFYNMTDGSHIYTFSKASFSGPLRPFFCLWSCGKKPLTICPVTDGLEGVMVVADAKDISKEIPLSPMGEDSASGDIETLHSKLIPLQPSQGVP.

The signal sequence occupies residues Met-1–Ser-26. Ig-like V-type domains are found at residues Ala-27–Lys-140 and Pro-148–Ser-234. Topologically, residues Ala-27–Arg-242 are extracellular. Intrachain disulfides connect Cys-50–Cys-124 and Cys-164–Cys-218. Residue Asn-55 is glycosylated (N-linked (GlcNAc...) (complex) asparagine). Asn-215 is a glycosylation site (N-linked (GlcNAc...) (hybrid) asparagine). A helical transmembrane segment spans residues Leu-243–Trp-269. The Cytoplasmic segment spans residues Arg-270–Pro-526. In terms of domain architecture, B30.2/SPRY spans Ser-285 to Leu-479.

Belongs to the immunoglobulin superfamily. BTN/MOG family. In terms of assembly, seems to associate with xanthine dehydrogenase/oxidase. As to expression, expressed in mammary tissue.

Its subcellular location is the membrane. May function in the secretion of milk-fat droplets. May act as a specific membrane-associated receptor for the association of cytoplasmic droplets with the apical plasma membrane. Inhibits the proliferation of CD4 and CD8 T-cells activated by anti-CD3 antibodies, T-cell metabolism and IL2 and IFNG secretion. This Bos taurus (Bovine) protein is Butyrophilin subfamily 1 member A1 (BTN1A1).